The following is a 728-amino-acid chain: Dehydrocurvularin biosynthesis regulator (728 aa).

A DNA-binding region (zn(2)-C6 fungal-type) is located at residues 28–58 (CWECKRRKMKCRFDPRIASACNGCRRRGSPC). Disordered stretches follow at residues 75–130 (GTTS…TSQR) and 606–626 (QHAT…NSDA). Residues 89–109 (RATTPSERTDQILTPVSTVRE) are compositionally biased toward polar residues.

Its subcellular location is the nucleus. In terms of biological role, transcription factor involved in regulation of the dehydrocurvularin biosynthesis gene cluster. The polypeptide is Dehydrocurvularin biosynthesis regulator (Aspergillus terreus).